Consider the following 415-residue polypeptide: Gamma-glutamyl phosphate reductase (415 aa).

This sequence belongs to the gamma-glutamyl phosphate reductase family.

Its subcellular location is the cytoplasm. The catalysed reaction is L-glutamate 5-semialdehyde + phosphate + NADP(+) = L-glutamyl 5-phosphate + NADPH + H(+). It participates in amino-acid biosynthesis; L-proline biosynthesis; L-glutamate 5-semialdehyde from L-glutamate: step 2/2. Catalyzes the NADPH-dependent reduction of L-glutamate 5-phosphate into L-glutamate 5-semialdehyde and phosphate. The product spontaneously undergoes cyclization to form 1-pyrroline-5-carboxylate. The polypeptide is Gamma-glutamyl phosphate reductase (Listeria monocytogenes serotype 4b (strain F2365)).